Reading from the N-terminus, the 338-residue chain is 1-aminocyclopropane-1-carboxylate deaminase (338 aa).

Position 51 is an N6-(pyridoxal phosphate)lysine (Lys-51). The Nucleophile role is filled by Ser-78.

This sequence belongs to the ACC deaminase/D-cysteine desulfhydrase family. Requires pyridoxal 5'-phosphate as cofactor.

The catalysed reaction is 1-aminocyclopropane-1-carboxylate + H2O = 2-oxobutanoate + NH4(+). Its function is as follows. Catalyzes a cyclopropane ring-opening reaction, the irreversible conversion of 1-aminocyclopropane-1-carboxylate (ACC) to ammonia and alpha-ketobutyrate. Allows growth on ACC as a nitrogen source. In Enterobacter cloacae, this protein is 1-aminocyclopropane-1-carboxylate deaminase.